The sequence spans 318 residues: DNA repair nuclease/redox regulator APEX1 (318 aa).

The interval 1–33 (MPKRGKKGAVAEDGDELRTEPEAKKSKTAAKKN) is necessary for interaction with YBX1, binding to RNA, association together with NPM1 to rRNA, endoribonuclease activity on abasic RNA and localization in the nucleoli. The interval 1–60 (MPKRGKKGAVAEDGDELRTEPEAKKSKTAAKKNDKEAAGEGPALYEDPPDQKTSPSGKPA) is disordered. Lys-6 and Lys-7 each carry N6-acetyllysine; by EP300. Residues 8-13 (GAVAED) carry the Nuclear localization signal (NLS) motif. Over residues 16–38 (ELRTEPEAKKSKTAAKKNDKEAA) the composition is skewed to basic and acidic residues. The interval 23–33 (AKKSKTAAKKN) is necessary for interaction with NPM1 and for efficient rRNA binding. N6-acetyllysine is present on residues Lys-27, Lys-31, Lys-32, and Lys-35. A Phosphoserine modification is found at Ser-54. The short motif at 64–80 (ICSWNVDGLRAWIKKKG) is the Nuclear export signal (NES) element. Residue Cys-65 is modified to S-nitrosocysteine; alternate. The cysteines at positions 65 and 93 are disulfide-linked. Asp-70 contributes to the Mg(2+) binding site. At Cys-93 the chain carries S-nitrosocysteine; alternate. Position 96 (Glu-96) interacts with Mg(2+). The active site involves Tyr-171. The residue at position 197 (Lys-197) is an N6-acetyllysine. Positions 210 and 212 each coordinate Mg(2+). The active-site Proton donor/acceptor is Asp-210. Thr-233 is subject to Phosphothreonine; by CDK5. Residues 289–318 (HSLLPALCDSKIRSKALGSDHCPITLYLAL) are mitochondrial targeting sequence (MTS). Mg(2+) is bound at residue Asp-308. An S-nitrosocysteine modification is found at Cys-310.

This sequence belongs to the DNA repair enzymes AP/ExoA family. As to quaternary structure, monomer. Homodimer; disulfide-linked. Component of the SET complex, composed of at least APEX1, SET, ANP32A, HMGB2, NME1 and TREX1. Associates with the dimer XRCC5/XRCC6 in a DNA-dependent manner. Interacts with SIRT1; the interaction is increased in the context of genotoxic stress. Interacts with HDAC1, HDAC2 and HDAC3; the interactions are not dependent on the APEX1 acetylation status. Interacts with XRCC1; the interaction is induced by SIRT1 and increased with the APEX1 acetylated form. Interacts with NPM1 (via N-terminal domain); the interaction is RNA-dependent and decreases in hydrogen peroxide-damaged cells. Interacts (via N-terminus) with YBX1 (via C-terminus); the interaction is increased in presence of APEX1 acetylated at Lys-6 and Lys-7. Interacts with HNRNPL; the interaction is DNA-dependent. Interacts (via N-terminus) with KPNA1 and KPNA2. Interacts with TXN; the interaction stimulates the FOS/JUN AP-1 complex DNA-binding activity in a redox-dependent manner. Interacts with GZMA, KRT8, MDM2, POLB, PRDX6, PRPF19, RPLP0, TOMM20 and WDR77. Binds to CDK5. Mg(2+) is required as a cofactor. The cofactor is Mn(2+). In terms of processing, phosphorylated. Phosphorylation by kinase PKC or casein kinase CK2 results in enhanced redox activity that stimulates binding of the FOS/JUN AP-1 complex to its cognate binding site. AP-endodeoxyribonuclease activity is not affected by CK2-mediated phosphorylation. Phosphorylation of Thr-233 by CDK5 in response to MPP(+)/MPTP (1-methyl-4-phenylpyridinium) reduces AP-endodeoxyribonuclease activity resulting in accumulation of DNA damage and contributing to neuronal death. Post-translationally, acetylated on Lys-6 and Lys-7. Acetylation is increased by the transcriptional coactivator EP300 acetyltransferase, genotoxic agents like H(2)O(2) and methyl methanesulfonate (MMS). Acetylation increases its binding affinity to the negative calcium response element (nCaRE) DNA promoter. The acetylated form induces a stronger binding of YBX1 to the Y-box sequence in the MDR1 promoter than the unacetylated form. Deacetylated on lysines. Lys-6 and Lys-7 are deacetylated by SIRT1. Cleaved at Lys-31 by granzyme A to create the mitochondrial form; leading in reduction of binding to DNA, AP endodeoxyribonuclease activity, redox activation of transcription factors and to enhanced cell death. Cleaved by granzyme K; leading to intracellular ROS accumulation and enhanced cell death after oxidative stress. In terms of processing, cys-69 and Cys-93 are nitrosylated in response to nitric oxide (NO) and lead to the exposure of the nuclear export signal (NES). Post-translationally, ubiquitinated by MDM2; leading to translocation to the cytoplasm and proteasomal degradation.

The protein localises to the nucleus. The protein resides in the nucleolus. It localises to the nucleus speckle. Its subcellular location is the endoplasmic reticulum. It is found in the cytoplasm. The protein localises to the mitochondrion. The catalysed reaction is a deoxyribonucleotide-2'-deoxyribose-5'-monophosphate-DNA + H2O = a 5'-end 2'-deoxyribose-5'-monophosphate-DNA + a 3'-end 2'-deoxyribonucleotide-DNA + H(+). The enzyme catalyses Exonucleolytic cleavage in the 3'- to 5'-direction to yield nucleoside 5'-phosphates.. It carries out the reaction a 3'-end 2'-deoxyribonucleotide-3'-phosphoglycolate-DNA + H2O = 2-phosphoglycolate + a 3'-end 2'-deoxyribonucleotide-DNA + H(+). It catalyses the reaction a 3'-end 2'-deoxyribonucleotide-8-oxoguanine-DNA + H2O = 8-oxo-dGMP + a 3'-end 2'-deoxyribonucleotide-DNA + H(+). With respect to regulation, NPM1 stimulates endodeoxyribonuclease activity on double-stranded DNA with AP sites, but inhibits endoribonuclease activity on single-stranded RNA containing AP sites. Multifunctional protein that plays a central role in the cellular response to oxidative stress. The two major activities of APEX1 are DNA repair and redox regulation of transcriptional factors. Functions as an apurinic/apyrimidinic (AP) endodeoxyribonuclease in the base excision repair (BER) pathway of DNA lesions induced by oxidative and alkylating agents. Initiates repair of AP sites in DNA by catalyzing hydrolytic incision of the phosphodiester backbone immediately adjacent to the damage, generating a single-strand break with 5'-deoxyribose phosphate and 3'-hydroxyl ends. Also incises at AP sites in the DNA strand of DNA/RNA hybrids, single-stranded DNA regions of R-loop structures, and single-stranded RNA molecules. Operates at switch sites of immunoglobulin (Ig) constant regions where it mediates Ig isotype class switch recombination. Processes AP sites induced by successive action of AICDA and UNG. Generates staggered nicks in opposite DNA strands resulting in the formation of double-strand DNA breaks that are finally resolved via non-homologous end joining repair pathway. Has 3'-5' exodeoxyribonuclease activity on mismatched deoxyribonucleotides at the 3' termini of nicked or gapped DNA molecules during short-patch BER. Possesses DNA 3' phosphodiesterase activity capable of removing lesions (such as phosphoglycolate and 8-oxoguanine) blocking the 3' side of DNA strand breaks. Also acts as an endoribonuclease involved in the control of single-stranded RNA metabolism. Plays a role in regulating MYC mRNA turnover by preferentially cleaving in between UA and CA dinucleotides of the MYC coding region determinant (CRD). In association with NMD1, plays a role in the rRNA quality control process during cell cycle progression. Acts as a loading factor for POLB onto non-incised AP sites in DNA and stimulates the 5'-terminal deoxyribose 5'-phosphate (dRp) excision activity of POLB. Exerts reversible nuclear redox activity to regulate DNA binding affinity and transcriptional activity of transcriptional factors by controlling the redox status of their DNA-binding domain, such as the FOS/JUN AP-1 complex after exposure to IR. Involved in calcium-dependent down-regulation of parathyroid hormone (PTH) expression by binding to negative calcium response elements (nCaREs). Together with HNRNPL or the dimer XRCC5/XRCC6, associates with nCaRE, acting as an activator of transcriptional repression. May also play a role in the epigenetic regulation of gene expression by participating in DNA demethylation. Stimulates the YBX1-mediated MDR1 promoter activity, when acetylated at Lys-6 and Lys-7, leading to drug resistance. Plays a role in protection from granzyme-mediated cellular repair leading to cell death. Binds DNA and RNA. Associates, together with YBX1, on the MDR1 promoter. Together with NPM1, associates with rRNA. The sequence is that of DNA repair nuclease/redox regulator APEX1 (APEX1) from Pan paniscus (Pygmy chimpanzee).